The chain runs to 592 residues: Probable oxidoreductase EphD (592 aa).

The region spanning 30 to 286 (PTVVLVHGFP…KAGHFSPMSH (257 aa)) is the AB hydrolase-1 domain. S461 is a binding site for substrate. Y474 acts as the Proton acceptor in catalysis.

This sequence belongs to the short-chain dehydrogenases/reductases (SDR) family.

The polypeptide is Probable oxidoreductase EphD (ephD) (Mycobacterium bovis (strain ATCC BAA-935 / AF2122/97)).